The primary structure comprises 127 residues: Large ribosomal subunit protein bL17 (127 aa).

This sequence belongs to the bacterial ribosomal protein bL17 family. Part of the 50S ribosomal subunit. Contacts protein L32.

This is Large ribosomal subunit protein bL17 from Legionella pneumophila (strain Paris).